We begin with the raw amino-acid sequence, 666 residues long: L-aspartate N-monooxygenase (nitrosuccinate-forming) (666 aa).

A disordered region spans residues 645-666; that stretch reads LPAYEDPGVRCPSDDRLTEVTA. Over residues 656 to 666 the composition is skewed to basic and acidic residues; it reads PSDDRLTEVTA.

The protein belongs to the nitrosuccinic acid synthase family. FAD is required as a cofactor.

The catalysed reaction is L-aspartate + 3 NADPH + 3 O2 + 2 H(+) = 2-nitrobutanedioate + 3 NADP(+) + 4 H2O. It participates in antibiotic biosynthesis. In terms of biological role, part of a gene cluster involved in the biosynthesis of cremeomycin, a light-sensitive o-diazoquinone with antibacterial and antiproliferative effects. Catalyzes the iterative oxidation of L-aspartic acid to nitrosuccinic acid (2-nitrobutanedioate) via N-hydroxyaspartic acid and nitrososuccinic acid. This chain is L-aspartate N-monooxygenase (nitrosuccinate-forming), found in Streptomyces cremeus.